A 1134-amino-acid chain; its full sequence is MMS19 nucleotide excision repair protein homolog (1134 aa).

4 HEAT repeats span residues 959–998 (QRCFSTIVPILESLIMNSQTSLSRTMLHVALAHVISNVPV), 1002–1047 (LDNT…KGQQ), 1050–1089 (SDNAHIIIECLIKLTSYPHLMVVRETSIQCLVALLELPHR), and 1092–1130 (YPFRREVLQAIEKSLDDPKRKVREEAIRCRQAWASITSG).

It belongs to the MET18/MMS19 family. As to quaternary structure, part of a complex composed of AE7, CIA1, MMS19 and NAR1. Interacts with AE7.

The protein localises to the nucleus. It is found in the cytoplasm. Functionally, may select specific target apoproteins to which a Fe-S cluster produced by the cytosolic iron-sulfur (Fe-S) protein assembly (CIA) pathway is transferred. In Arabidopsis thaliana (Mouse-ear cress), this protein is MMS19 nucleotide excision repair protein homolog.